We begin with the raw amino-acid sequence, 290 residues long: Endoplasmic reticulum-Golgi intermediate compartment protein 1 (290 aa).

Residues 1–26 (MPFDFRRFDIYRKVPKDLTQPTYTGA) lie on the Cytoplasmic side of the membrane. Residues 27–47 (IISICCCLFITFLFLSELTGF) traverse the membrane as a helical segment. The Lumenal portion of the chain corresponds to 48 to 254 (IANEIVNELY…RRQPMYRFIT (207 aa)). Asn74 is a glycosylation site (N-linked (GlcNAc...) asparagine). The helical transmembrane segment at 255–275 (TVCAIIGGTFTVAGILDSFIF) threads the bilayer. At 276 to 290 (TASEAWKKIQLGKMQ) the chain is on the cytoplasmic side.

This sequence belongs to the ERGIC family.

Its subcellular location is the endoplasmic reticulum membrane. The protein localises to the endoplasmic reticulum-Golgi intermediate compartment membrane. The protein resides in the golgi apparatus membrane. In terms of biological role, possible role in transport between endoplasmic reticulum and Golgi. The polypeptide is Endoplasmic reticulum-Golgi intermediate compartment protein 1 (ergic1) (Xenopus laevis (African clawed frog)).